Reading from the N-terminus, the 410-residue chain is 26S proteasome non-ATPase regulatory subunit 6 (410 aa).

Positions 207-382 (DFAGAADLFL…GVIEVNHRDS (176 aa)) constitute a PCI domain.

This sequence belongs to the proteasome subunit S10 family. Expressed in multiple tissues including the intestine, pharynx and hypodermis.

In terms of biological role, acts as a regulatory subunit of the 26S proteasome which is involved in the ATP-dependent degradation of ubiquitinated proteins. The sequence is that of 26S proteasome non-ATPase regulatory subunit 6 (rpn-7) from Caenorhabditis elegans.